Here is a 190-residue protein sequence, read N- to C-terminus: Elongation factor P-like protein (190 aa).

The protein belongs to the elongation factor P family.

The protein is Elongation factor P-like protein of Yersinia enterocolitica serotype O:8 / biotype 1B (strain NCTC 13174 / 8081).